A 427-amino-acid chain; its full sequence is 3-phosphoshikimate 1-carboxyvinyltransferase (427 aa).

3-phosphoshikimate is bound by residues lysine 22, serine 23, and arginine 27. Residue lysine 22 participates in phosphoenolpyruvate binding. 2 residues coordinate phosphoenolpyruvate: glycine 94 and arginine 122. 3-phosphoshikimate contacts are provided by serine 165, glutamine 167, aspartate 313, and lysine 340. Glutamine 167 is a binding site for phosphoenolpyruvate. Aspartate 313 (proton acceptor) is an active-site residue. The phosphoenolpyruvate site is built by arginine 344 and arginine 386.

Belongs to the EPSP synthase family. In terms of assembly, monomer.

The protein resides in the cytoplasm. It catalyses the reaction 3-phosphoshikimate + phosphoenolpyruvate = 5-O-(1-carboxyvinyl)-3-phosphoshikimate + phosphate. Its pathway is metabolic intermediate biosynthesis; chorismate biosynthesis; chorismate from D-erythrose 4-phosphate and phosphoenolpyruvate: step 6/7. In terms of biological role, catalyzes the transfer of the enolpyruvyl moiety of phosphoenolpyruvate (PEP) to the 5-hydroxyl of shikimate-3-phosphate (S3P) to produce enolpyruvyl shikimate-3-phosphate and inorganic phosphate. The sequence is that of 3-phosphoshikimate 1-carboxyvinyltransferase from Koribacter versatilis (strain Ellin345).